We begin with the raw amino-acid sequence, 644 residues long: Cell pattern formation-associated protein StuA (644 aa).

Residues 18-33 (ATAHAPASAAPSGISH) show a composition bias toward low complexity. Disordered stretches follow at residues 18–58 (ATAH…PGYP) and 86–120 (QLPA…APPG). Polar residues predominate over residues 38 to 47 (PQSSMMQPGQ). Positions 87–104 (LPAMSSSGPSPSLSGAQS) are enriched in low complexity. The HTH APSES-type domain occupies 124–230 (RVTATLWEDE…HDIGALLYHP (107 aa)). A DNA-binding region (H-T-H motif) is located at residues 158–179 (GTKLLNVAGMTRGRRDGILKSE). A disordered region spans residues 239-644 (GSAAMAAVDR…HTMTAQRARR (406 aa)). Positions 253–269 (SMQTQRYISGPTTSQPP) are enriched in polar residues. Positions 315–328 (SASSIMGMSNSGSS) are enriched in low complexity. Composition is skewed to polar residues over residues 334–357 (ANVQ…TRSV), 371–383 (QAIS…SYDN), and 395–404 (PGQYNTQGQS). Over residues 456–465 (EGDHEHDNEY) the composition is skewed to basic and acidic residues. Low complexity predominate over residues 509 to 524 (GSGRATPRTTTTSQTQ). The span at 525–544 (WNSGYPTPQRQGPPSSNLYN) shows a compositional bias: polar residues. Residues 584 to 612 (KRGRDDDDEDPYRPDSVQSDDMGGLKRRK) form a nuclear localization domain region. Over residues 635–644 (HTMTAQRARR) the composition is skewed to polar residues.

Belongs to the EFG1/PHD1/stuA family.

The protein localises to the nucleus. In terms of biological role, transcription factor that regulates asexual reproduction. Binds the StuA-response elements (StRE) with the consensus sequence 5'-(A/T)CGCG(T/A)N(A/C)-3' at the promoters of target genes. Required for pathogenicity and positively regulates the synthesis of the mycotoxin alternariol. Acts as a positive regulator of Tox3 but is not required for the expression of ToxA. Also acts as a central regulator of carbon metabolism including glycolysis, the TCA cycle, and amino acid synthesis. This Phaeosphaeria nodorum (strain SN15 / ATCC MYA-4574 / FGSC 10173) (Glume blotch fungus) protein is Cell pattern formation-associated protein StuA.